Reading from the N-terminus, the 251-residue chain is Uridylate kinase (251 aa).

26-29 (KLGG) contacts ATP. Residue Gly67 coordinates UMP. Positions 68 and 72 each coordinate ATP. UMP-binding positions include Asp87 and 148–155 (MGLPYFST). 2 residues coordinate ATP: Phe181 and Asp184.

It belongs to the UMP kinase family. Homohexamer.

The protein resides in the cytoplasm. It carries out the reaction UMP + ATP = UDP + ADP. Its pathway is pyrimidine metabolism; CTP biosynthesis via de novo pathway; UDP from UMP (UMPK route): step 1/1. With respect to regulation, inhibited by UTP. In terms of biological role, catalyzes the reversible phosphorylation of UMP to UDP. The protein is Uridylate kinase of Mycolicibacterium vanbaalenii (strain DSM 7251 / JCM 13017 / BCRC 16820 / KCTC 9966 / NRRL B-24157 / PYR-1) (Mycobacterium vanbaalenii).